The chain runs to 423 residues: Limonoid 21-O-acetyltransferse (423 aa).

Catalysis depends on proton acceptor residues histidine 152 and aspartate 362.

It belongs to the plant acyltransferase family. Monomer. As to expression, mainly expressed in petioles.

It catalyses the reaction isomeliandiol + acetyl-CoA = 21-O-acetyl-isomeliandiol + CoA. It functions in the pathway secondary metabolite biosynthesis; terpenoid biosynthesis. Its function is as follows. Acetyltransferase involved in the biosynthesis of limonoids triterpene natural products such as azadirachtin, an antifeedant widely used as bioinsecticide, and possessing many medicinal applications including anti-tumoral, anti-malarial, anti-rheumatic, antibacterial, anti-inflammatory, anti-pyretic and diuretic effects. Catalyzes the formation of 21-O-acetyl-isomeliandiol from isomeliandiol. This chain is Limonoid 21-O-acetyltransferse, found in Melia azedarach (Chinaberry tree).